The following is a 248-amino-acid chain: Ribosomal RNA small subunit methyltransferase G (248 aa).

Residues G85, F90, 108-110 (DSS), 137-138 (AE), and R156 contribute to the S-adenosyl-L-methionine site.

It belongs to the methyltransferase superfamily. RNA methyltransferase RsmG family.

The protein resides in the cytoplasm. In terms of biological role, specifically methylates the N7 position of a guanine in 16S rRNA. This chain is Ribosomal RNA small subunit methyltransferase G, found in Prochlorococcus marinus (strain NATL2A).